Consider the following 405-residue polypeptide: Threonine synthase (405 aa).

An N6-(pyridoxal phosphate)lysine modification is found at Lys-106. Pyridoxal 5'-phosphate-binding positions include Asn-132, Gly-233–Asn-237, and Thr-371.

It belongs to the threonine synthase family. It depends on pyridoxal 5'-phosphate as a cofactor.

The catalysed reaction is O-phospho-L-homoserine + H2O = L-threonine + phosphate. Its pathway is amino-acid biosynthesis; L-threonine biosynthesis; L-threonine from L-aspartate: step 5/5. Functionally, catalyzes the gamma-elimination of phosphate from L-phosphohomoserine and the beta-addition of water to produce L-threonine. This Methanocaldococcus jannaschii (strain ATCC 43067 / DSM 2661 / JAL-1 / JCM 10045 / NBRC 100440) (Methanococcus jannaschii) protein is Threonine synthase (thrC).